A 377-amino-acid chain; its full sequence is Phosphoserine aminotransferase (377 aa).

R43 contributes to the L-glutamate binding site. Residues W105, T164, D189, and Q212 each coordinate pyridoxal 5'-phosphate. K213 carries the N6-(pyridoxal phosphate)lysine modification. 254 to 255 provides a ligand contact to pyridoxal 5'-phosphate; the sequence is NT.

Belongs to the class-V pyridoxal-phosphate-dependent aminotransferase family. SerC subfamily. Homodimer. Requires pyridoxal 5'-phosphate as cofactor.

It localises to the cytoplasm. The catalysed reaction is O-phospho-L-serine + 2-oxoglutarate = 3-phosphooxypyruvate + L-glutamate. The enzyme catalyses 4-(phosphooxy)-L-threonine + 2-oxoglutarate = (R)-3-hydroxy-2-oxo-4-phosphooxybutanoate + L-glutamate. Its pathway is amino-acid biosynthesis; L-serine biosynthesis; L-serine from 3-phospho-D-glycerate: step 2/3. The protein operates within cofactor biosynthesis; pyridoxine 5'-phosphate biosynthesis; pyridoxine 5'-phosphate from D-erythrose 4-phosphate: step 3/5. Functionally, catalyzes the reversible conversion of 3-phosphohydroxypyruvate to phosphoserine and of 3-hydroxy-2-oxo-4-phosphonooxybutanoate to phosphohydroxythreonine. This Bordetella pertussis (strain Tohama I / ATCC BAA-589 / NCTC 13251) protein is Phosphoserine aminotransferase.